The primary structure comprises 233 residues: tRNA (guanine-N(1)-)-methyltransferase (233 aa).

S-adenosyl-L-methionine contacts are provided by residues G113 and V133 to L138.

It belongs to the RNA methyltransferase TrmD family. Homodimer.

The protein localises to the cytoplasm. The catalysed reaction is guanosine(37) in tRNA + S-adenosyl-L-methionine = N(1)-methylguanosine(37) in tRNA + S-adenosyl-L-homocysteine + H(+). Specifically methylates guanosine-37 in various tRNAs. The protein is tRNA (guanine-N(1)-)-methyltransferase of Rhizobium etli (strain ATCC 51251 / DSM 11541 / JCM 21823 / NBRC 15573 / CFN 42).